The chain runs to 491 residues: Cobyric acid synthase (491 aa).

Positions 250–439 constitute a GATase cobBQ-type domain; it reads EVTIAVIRLP…LHGIFDNGAW (190 aa). Cys331 functions as the Nucleophile in the catalytic mechanism. Residue His431 is part of the active site.

Belongs to the CobB/CobQ family. CobQ subfamily.

The protein operates within cofactor biosynthesis; adenosylcobalamin biosynthesis. Catalyzes amidations at positions B, D, E, and G on adenosylcobyrinic A,C-diamide. NH(2) groups are provided by glutamine, and one molecule of ATP is hydrogenolyzed for each amidation. The chain is Cobyric acid synthase from Synechococcus sp. (strain ATCC 27144 / PCC 6301 / SAUG 1402/1) (Anacystis nidulans).